A 641-amino-acid chain; its full sequence is Threonine--tRNA ligase (641 aa).

The 61-residue stretch at 1–61 folds into the TGS domain; that stretch reads MPAITLPDGS…DDDVQLEIVT (61 aa). Residues 242–533 are catalytic; that stretch reads DHRRIGRAQN…LIEHYAGALP (292 aa). Zn(2+) is bound by residues Cys-333, His-384, and His-510.

It belongs to the class-II aminoacyl-tRNA synthetase family. In terms of assembly, homodimer. The cofactor is Zn(2+).

The protein localises to the cytoplasm. It catalyses the reaction tRNA(Thr) + L-threonine + ATP = L-threonyl-tRNA(Thr) + AMP + diphosphate + H(+). Functionally, catalyzes the attachment of threonine to tRNA(Thr) in a two-step reaction: L-threonine is first activated by ATP to form Thr-AMP and then transferred to the acceptor end of tRNA(Thr). Also edits incorrectly charged L-seryl-tRNA(Thr). The polypeptide is Threonine--tRNA ligase (Alkalilimnicola ehrlichii (strain ATCC BAA-1101 / DSM 17681 / MLHE-1)).